The primary structure comprises 764 residues: DNA polymerase 3 (764 aa).

It belongs to the DNA polymerase type-B family.

It carries out the reaction DNA(n) + a 2'-deoxyribonucleoside 5'-triphosphate = DNA(n+1) + diphosphate. This Saccharolobus solfataricus (strain ATCC 35092 / DSM 1617 / JCM 11322 / P2) (Sulfolobus solfataricus) protein is DNA polymerase 3 (dpo3).